A 170-amino-acid polypeptide reads, in one-letter code: UPF0316 protein CLK_3798 (170 aa).

2 consecutive transmembrane segments (helical) span residues 1-21 and 36-56; these read MLSY…LMTI and IIGF…LSGI.

It belongs to the UPF0316 family.

The protein localises to the cell membrane. This is UPF0316 protein CLK_3798 from Clostridium botulinum (strain Loch Maree / Type A3).